A 207-amino-acid polypeptide reads, in one-letter code: Ribosome maturation factor RimM (207 aa).

The region spanning 130 to 207 is the PRC barrel domain; the sequence is EDEFYWVDLI…RIVVDWGLDY (78 aa).

It belongs to the RimM family. Binds ribosomal protein uS19.

It is found in the cytoplasm. Functionally, an accessory protein needed during the final step in the assembly of 30S ribosomal subunit, possibly for assembly of the head region. Essential for efficient processing of 16S rRNA. May be needed both before and after RbfA during the maturation of 16S rRNA. It has affinity for free ribosomal 30S subunits but not for 70S ribosomes. In Cupriavidus taiwanensis (strain DSM 17343 / BCRC 17206 / CCUG 44338 / CIP 107171 / LMG 19424 / R1) (Ralstonia taiwanensis (strain LMG 19424)), this protein is Ribosome maturation factor RimM.